The chain runs to 1174 residues: Tight junction protein 2 (1174 aa).

Residues 10-97 (TVTLQKDSKR…IAAIVVKRPR (88 aa)) enclose the PDZ 1 domain. 10 positions are modified to phosphoserine: Ser107, Ser127, Ser130, Ser140, Ser145, Ser147, Ser151, Ser173, Ser195, and Ser217. The span at 125–137 (GRSARSGYSERSR) shows a compositional bias: basic and acidic residues. Residues 125–290 (GRSARSGYSE…AGQPDSDRPI (166 aa)) form a disordered region. Residues 146-214 (RSWEDSPERG…DYGRPGERSH (69 aa)) show a composition bias toward basic and acidic residues. A compositionally biased stretch (basic and acidic residues) spans 220-235 (RGYDRGYDRGYDRGYD). Residue Ser239 is modified to Phosphoserine. 2 stretches are compositionally biased toward basic and acidic residues: residues 243-266 (EYGRRTQPDARHAGSRSRSREHLR) and 274-288 (LRGRPDHAGQPDSDR). The PDZ 2 domain maps to 291 to 369 (GVLLMKSKAN…KLQLVVLRDS (79 aa)). A phosphoserine mark is found at Ser309, Ser382, Ser384, Ser390, Ser399, Ser408, Ser414, and Ser415. Residues 391–430 (EIESNRSFSPEERRQQYSDYDYHSSNEKLKERPNSREDMQ) form a disordered region. Basic and acidic residues predominate over residues 399-430 (SPEERRQQYSDYDYHSSNEKLKERPNSREDMQ). Thr439 carries the phosphothreonine modification. Residues 456–490 (ENSKEPRYQEEPPAPQPKAAPRTFLRPSPEDEAIY) are disordered. At Ser483 the chain carries Phosphoserine. Residues 493–574 (NTKMVRFKKG…GEMVTILAQS (82 aa)) form the PDZ 3 domain. A Phosphotyrosine modification is found at Tyr558. The SH3 domain occupies 588–653 (GDSFFIRSHF…PNKSRAEQMA (66 aa)). Positions 679 to 860 (MKKNLRKSRE…WFGSLKDTIQ (182 aa)) constitute a Guanylate kinase-like domain. Residues Ser686 and Ser886 each carry the phosphoserine modification. Thr889 carries the post-translational modification Phosphothreonine. A phosphoserine mark is found at Ser897 and Ser904. Disordered regions lie at residues 904–1065 (SDFE…VLGK) and 1100–1174 (DIYA…DTEL). Thr909 and Thr917 each carry phosphothreonine. Basic and acidic residues predominate over residues 940–951 (VQHEESIRKPSP). Residues Ser950, Ser962, Ser970, Ser990, and Ser1052 each carry the phosphoserine modification. Basic and acidic residues predominate over residues 978-1000 (EPPKAKTQNREESFDISRSHDYK). Positions 1044–1056 (ESEEVGEGSEEQE) are enriched in acidic residues. Phosphotyrosine is present on Tyr1102. A phosphoserine mark is found at Ser1131 and Ser1143. Basic and acidic residues predominate over residues 1150–1159 (YRQQLSEHSK). The interval 1172–1174 (TEL) is interaction with SCRIB.

The protein belongs to the MAGUK family. Homodimer. Interacts (via PDZ2 domain) with TJP1/ZO1 (via PDZ2 domain). Interacts with UBN1. Interacts with SCRIB. Interacts with OCLN. Interacts with SAFB in the nucleus. Interacts with USP53 (via the C-terminal region). Interacts with claudins, including CLDN1, CLDN2, CLDN3, CLDN5 and CLDN7. Interacts with CLDN18. Interacts (via N-terminus) with CTNNA1. In terms of processing, phosphorylated.

Its subcellular location is the cell junction. It is found in the adherens junction. The protein localises to the cell membrane. The protein resides in the nucleus. It localises to the tight junction. In terms of biological role, plays a role in tight junctions and adherens junctions. Acts as a positive regulator of RANKL-induced osteoclast differentiation, potentially via mediating downstream transcriptional activity. In Canis lupus familiaris (Dog), this protein is Tight junction protein 2.